Consider the following 897-residue polypeptide: Interleukin enhancer-binding factor 3-A (897 aa).

The DZF domain occupies 5–379 (RIFLNDDRHV…PLKRPIEEDG (375 aa)). 3 disordered regions span residues 52–85 (QEKDCSGEQEQPMAEETETTEEGKDSEMKTGENP), 364–403 (TTYAMPPLKRPIEEDGDDKSPSKKKKKIQKKDEKSEPPQV), and 466–502 (MGLPTGMEEKEEGTDESEQKPVVQTPAQPDDSAEVDS). Composition is skewed to basic and acidic residues over residues 72–81 (EEGKDSEMKT) and 373–384 (RPIEEDGDDKSP). The short motif at 372 to 390 (KRPIEEDGDDKSPSKKKKK) is the Bipartite nuclear localization signal element. DRBM domains lie at 399–468 (EPPQ…DMGL) and 521–587 (HGKN…KLFP). Disordered regions lie at residues 627 to 650 (PPPQAMRGRGRGGMNRGRGRGRGG) and 708 to 797 (GDSY…AQGA). The span at 637-650 (RGGMNRGRGRGRGG) shows a compositional bias: gly residues. The segment covering 714–747 (PTPPKPFVNKKPPPPQQQQQQQPPPQHASNPPKP) has biased composition (pro residues). Over residues 749 to 794 (YNQGYQGHQGGQQQQQQQQQQQTYNQNQYSNYGPPQKQKGGYNQGA) the composition is skewed to low complexity.

In terms of assembly, a component of a ybx2/frgy2-containing mRNA-ribonucleoprotein (mRNP) complex. Also a component of the CCAAT box transcription factor (CBTF) complex. Phosphorylated. Phosphorylation affects nuclear translocation. Post-translationally, methylated by protein arginine N-methyltransferase 1 (prmt1b) in the RGG-rich domain. Methylation decreases DNA-binding and thereby decreases transcription of the gata2 gene, but does not regulate dsRNA binding or subcellular localization. As to expression, expressed mainly in the ectoderm (at protein level).

Its subcellular location is the nucleus. The protein localises to the cytoplasm. In terms of biological role, RNA-binding protein that plays an essential role in the biogenesis of circular RNAs (circRNAs) which are produced by back-splicing circularization of pre-mRNAs. Within the nucleus, promotes circRNAs processing by stabilizing the regulatory elements residing in the flanking introns of the circularized exons. Plays thereby a role in the back-splicing of a subset of circRNAs. As a consequence, participates in a wide range of transcriptional and post-transcriptional processes. Binds to poly-U elements and AU-rich elements (AREs) in the 3'-UTR of target mRNAs. Upon viral infection, ILF3 accumulates in the cytoplasm and participates in the innate antiviral response. Mechanistically, ILF3 becomes phosphorylated and activated by the double-stranded RNA-activated protein kinase/PKR which releases ILF3 from cellular mature circRNAs. In turn, unbound ILF3 molecules are able to interact with and thus inhibit viral mRNAs. Has a cytoplasmic role early in development as part of a ribonucleoprotein (mRNP) complex which may regulate mRNA transport and/or translation. Following nuclear localization at the mid-blastula transition, acts as a transcription factor and binds the 5'-CCAAT-3' promoter sequence to regulate transcription of the gata2 gene as a subunit of the CCAAT box transcription factor (CBTF). Its role as an mRNP component negatively regulates its activity as a transcription factor by precluding its nuclear localization. The protein is Interleukin enhancer-binding factor 3-A (ilf3-a) of Xenopus laevis (African clawed frog).